The following is a 244-amino-acid chain: tRNA pseudouridine synthase A (244 aa).

The active-site Nucleophile is D52. Residue Y110 participates in substrate binding.

Belongs to the tRNA pseudouridine synthase TruA family. Homodimer.

The enzyme catalyses uridine(38/39/40) in tRNA = pseudouridine(38/39/40) in tRNA. Formation of pseudouridine at positions 38, 39 and 40 in the anticodon stem and loop of transfer RNAs. This Geotalea daltonii (strain DSM 22248 / JCM 15807 / FRC-32) (Geobacter daltonii) protein is tRNA pseudouridine synthase A.